Consider the following 312-residue polypeptide: Transcription initiation factor IIB-2 (312 aa).

The TFIIB-type zinc finger occupies S2–E34. Residues C6, C9, C26, and C29 each coordinate Zn(2+). 2 tandem repeats follow at residues M115–K192 and F216–P290.

Belongs to the TFIIB family. In terms of assembly, associates with TFIID-IIA (DA complex) to form TFIID-IIA-IIB (DAB-complex) which is then recognized by polymerase II.

Its subcellular location is the nucleus. In terms of biological role, general factor that plays a major role in the activation of eukaryotic genes transcribed by RNA polymerase II. The chain is Transcription initiation factor IIB-2 (TFIIB2) from Arabidopsis thaliana (Mouse-ear cress).